Reading from the N-terminus, the 273-residue chain is Kit ligand (273 aa).

Positions 1–25 (MKKTQTWIITCIYLQLLLFNPLVKT) are cleaved as a signal peptide. Residues 26-214 (KEICGNPVTD…AKAPEDSGLQ (189 aa)) lie on the Extracellular side of the membrane. Disulfide bonds link C29/C114 and C68/C163. N90, N97, N145, and N195 each carry an N-linked (GlcNAc...) asparagine glycan. Residues 190–210 (ASSLRNDSSSSNRKAAKAPED) are disordered. Positions 191-202 (SSLRNDSSSSNR) are enriched in low complexity. Residues 215 to 237 (WTAMALPALISLVIGFAFGALYW) traverse the membrane as a helical segment. At 238–273 (KKKQSSLTRAVENIQINEEDNEISMLQQKEREFQEV) the chain is on the cytoplasmic side.

The protein belongs to the SCF family. As to quaternary structure, homodimer, non-covalently linked. Heterotetramer with KIT, binding two KIT molecules; thereby mediates KIT dimerization and subsequent activation by autophosphorylation. Post-translationally, a soluble form is produced by proteolytic processing of isoform 1 in the extracellular domain. In terms of tissue distribution, expressed in the cochlea.

The protein localises to the cell membrane. The protein resides in the cytoplasm. Its subcellular location is the cytoskeleton. It is found in the cell projection. It localises to the lamellipodium. The protein localises to the filopodium. The protein resides in the secreted. In terms of biological role, ligand for the receptor-type protein-tyrosine kinase KIT. Plays an essential role in the regulation of cell survival and proliferation, hematopoiesis, stem cell maintenance, gametogenesis, mast cell development, migration and function, and in melanogenesis. KITLG/SCF binding can activate several signaling pathways. Promotes phosphorylation of PIK3R1, the regulatory subunit of phosphatidylinositol 3-kinase, and subsequent activation of the kinase AKT1. KITLG/SCF and KIT also transmit signals via GRB2 and activation of RAS, RAF1 and the MAP kinases MAPK1/ERK2 and/or MAPK3/ERK1. KITLG/SCF and KIT promote activation of STAT family members STAT1, STAT3 and STAT5. KITLG/SCF and KIT promote activation of PLCG1, leading to the production of the cellular signaling molecules diacylglycerol and inositol 1,4,5-trisphosphate. KITLG/SCF acts synergistically with other cytokines, probably interleukins. In Mus musculus (Mouse), this protein is Kit ligand (Kitlg).